The chain runs to 189 residues: MAPAWSFLLSLLLLSCNAICSLGCHLPHTHSLANRRVLMLLQQLRRVSPSSCLQDRNDFEFLQEALGGSQLQKAQAISVLHEVTQHTFQLFSTEGSPATWDKSLLDKLRAALDQQLTDLQACLTQEEGLRGAPLLKEDSSLAVRKYFHRLTLYLQEKRHSPCAWEVVRAEVMRAFSSSTNLQESFRRKD.

The N-terminal stretch at 1–23 (MAPAWSFLLSLLLLSCNAICSLG) is a signal peptide. Cystine bridges form between Cys24–Cys122 and Cys52–Cys162.

This sequence belongs to the alpha/beta interferon family.

It localises to the secreted. In terms of biological role, produced by macrophages, IFN-alpha have antiviral activities. Interferon stimulates the production of two enzymes: a protein kinase and an oligoadenylate synthetase. In Bos taurus (Bovine), this protein is Interferon alpha-A (IFNAA).